We begin with the raw amino-acid sequence, 513 residues long: Galactose-1-phosphate uridylyltransferase (513 aa).

It belongs to the galactose-1-phosphate uridylyltransferase type 2 family.

The protein resides in the cytoplasm. The enzyme catalyses alpha-D-galactose 1-phosphate + UDP-alpha-D-glucose = alpha-D-glucose 1-phosphate + UDP-alpha-D-galactose. The protein operates within carbohydrate metabolism; galactose metabolism. In Bacillus subtilis (strain 168), this protein is Galactose-1-phosphate uridylyltransferase (galT).